Reading from the N-terminus, the 211-residue chain is Metalloproteinase inhibitor 3 (211 aa).

An N-terminal signal peptide occupies residues 1–23 (MTPWLGLVVLLSCWSLGHWGTEA). Cysteine 24 provides a ligand contact to Zn(2+). 2 involved in metalloproteinase-binding regions span residues 24-27 (CTCS) and 88-89 (ES). 6 cysteine pairs are disulfide-bonded: cysteine 24–cysteine 91, cysteine 26–cysteine 118, cysteine 36–cysteine 143, cysteine 145–cysteine 192, cysteine 150–cysteine 155, and cysteine 163–cysteine 184. The region spanning 24–143 (CTCSPSHPQD…GLNYRYHLGC (120 aa)) is the NTR domain. A mediates interaction with EFEMP1 region spans residues 105-188 (TGRVYEGKMY…SKHYACIRQK (84 aa)).

Belongs to the protease inhibitor I35 (TIMP) family. In terms of assembly, interacts with EFEMP1. Interacts with KDR.

The protein localises to the secreted. It is found in the extracellular space. The protein resides in the extracellular matrix. In terms of biological role, mediates a variety of processes including matrix regulation and turnover, inflammation, and angiogenesis, through reversible inhibition of zinc protease superfamily enzymes, primarily matrix metalloproteinases (MMPs). Regulates extracellular matrix (ECM) remodeling through inhibition of matrix metalloproteinases (MMP) including MMP-1, MMP-2, MMP-3, MMP-7, MMP-9, MMP-13, MMP-14 and MMP-15. Additionally, modulates the processing of amyloid precursor protein (APP) and apolipoprotein E receptor ApoER2 by inhibiting two alpha-secretases ADAM10 and ADAM17. Functions as a tumor suppressor and a potent inhibitor of angiogenesis. Exerts its anti-angiogenic effect by directly interacting with vascular endothelial growth factor (VEGF) receptor-2/KDR, preventing its binding to the VEGFA ligand. Selectively induces apoptosis in angiogenic endothelial cells through a caspase-independent cell death pathway. Mechanistically, inhibits matrix-induced focal adhesion kinase PTK2 tyrosine phosphorylation and association with paxillin/PXN and disrupts the incorporation of ITGB3, PTK2 and PXN into focal adhesion contacts on the matrix. This Rattus norvegicus (Rat) protein is Metalloproteinase inhibitor 3 (Timp3).